The sequence spans 168 residues: MPRRPINKKRTLLPDPVYNSVSVHMLVNRVLKSGKKSVAYRIVYNALKEIGDVTQKNPVEVFEKALDNVTPRVEVKPRRRAGAIQMVPRVLRLGDRARANSLRWIMEACDKRSGQPMVTKLKSEILDAYKKTGFAIRKKEELHKIAIANAMYAKKPQVIINAINLLVD.

Belongs to the universal ribosomal protein uS7 family. Part of the 30S ribosomal subunit.

The protein localises to the plastid. It is found in the chloroplast. One of the primary rRNA binding proteins, it binds directly to 16S rRNA where it nucleates assembly of the head domain of the 30S subunit. In Chlamydomonas reinhardtii (Chlamydomonas smithii), this protein is Small ribosomal subunit protein uS7c (rps7).